The sequence spans 471 residues: Tripartite motif-containing protein 60 (471 aa).

The RING-type zinc finger occupies 16–57 (CPICLEYLKDPVTINCGHNFCRSCLSVSWKDLDDTFPCPVCR). The B box-type zinc-finger motif lies at 92–133 (KENAMCEKHNQFLTLFCVKDLEILCTQCSFSTKHQKHYICPI). Residues Cys97, His100, Cys119, and His125 each contribute to the Zn(2+) site. A coiled-coil region spans residues 171 to 223 (ELKKKVEYKREEINSEFEQIRLFLQNEQEMILRQIQDEEMNILAKLNENLVEL). Residues 277 to 470 (FSLPPQYSGL…LKICSVSDSE (194 aa)) enclose the B30.2/SPRY domain.

The protein belongs to the TRIM/RBCC family.

E3 SUMO-protein ligase that mediates SUMOylation of TAB2 leading to inhibition of NF-kappa-B and MAPK pathways by suppressing the TRAF6/TAB2/TAK1 complex. In Homo sapiens (Human), this protein is Tripartite motif-containing protein 60 (TRIM60).